The chain runs to 221 residues: 7-carboxy-7-deazaguanine synthase (221 aa).

Substrate is bound by residues 12-14 (ING) and R27. In terms of domain architecture, Radical SAM core spans 18–216 (KSGQLSVFIR…IQIHKIIWNP (199 aa)). C31, C35, and C38 together coordinate [4Fe-4S] cluster. T40 is a binding site for Mg(2+). T73 contacts substrate. An S-adenosyl-L-methionine-binding site is contributed by G75.

This sequence belongs to the radical SAM superfamily. 7-carboxy-7-deazaguanine synthase family. Homodimer. It depends on [4Fe-4S] cluster as a cofactor. Requires S-adenosyl-L-methionine as cofactor. Mg(2+) is required as a cofactor.

It catalyses the reaction 6-carboxy-5,6,7,8-tetrahydropterin + H(+) = 7-carboxy-7-deazaguanine + NH4(+). It participates in purine metabolism; 7-cyano-7-deazaguanine biosynthesis. In terms of biological role, catalyzes the complex heterocyclic radical-mediated conversion of 6-carboxy-5,6,7,8-tetrahydropterin (CPH4) to 7-carboxy-7-deazaguanine (CDG), a step common to the biosynthetic pathways of all 7-deazapurine-containing compounds. This chain is 7-carboxy-7-deazaguanine synthase, found in Clostridium acetobutylicum (strain ATCC 824 / DSM 792 / JCM 1419 / IAM 19013 / LMG 5710 / NBRC 13948 / NRRL B-527 / VKM B-1787 / 2291 / W).